Consider the following 180-residue polypeptide: Putative peroxiredoxin YkuU (180 aa).

In terms of domain architecture, Thioredoxin spans R4–T165. C52 acts as the Cysteine sulfenic acid (-SOH) intermediate in catalysis.

It belongs to the peroxiredoxin family. AhpC/Prx1 subfamily. In terms of assembly, homodimer; disulfide-linked, upon oxidation.

It is found in the cytoplasm. The enzyme catalyses a hydroperoxide + [protein]-dithiol = [protein]-disulfide + an alcohol + H2O. Thiol-specific peroxidase that catalyzes the reduction of hydrogen peroxide and organic hydroperoxides to water and alcohols, respectively. Plays a role in cell protection against oxidative stress by detoxifying peroxides. The sequence is that of Putative peroxiredoxin YkuU (ykuU) from Bacillus subtilis (strain 168).